The chain runs to 398 residues: Acetyl-CoA acetyltransferase erg10B, cytosolic (398 aa).

Cys92 acts as the Acyl-thioester intermediate in catalysis. Tyr187 is a binding site for K(+). CoA contacts are provided by Asn229 and Lys232. Residues Ala249, Pro250, and Ser252 each coordinate K(+). Ser253 is a binding site for CoA. Position 350 (Val350) interacts with K(+). Active-site proton acceptor residues include His354 and Cys384. Position 385 (Asn385) interacts with chloride.

The protein belongs to the thiolase-like superfamily. Thiolase family. As to quaternary structure, homotetramer. It depends on K(+) as a cofactor.

The protein resides in the cytoplasm. Its subcellular location is the cytosol. It carries out the reaction 2 acetyl-CoA = acetoacetyl-CoA + CoA. Its pathway is metabolic intermediate biosynthesis; (R)-mevalonate biosynthesis; (R)-mevalonate from acetyl-CoA: step 1/3. Its activity is regulated as follows. Activity is increased by monovalent cations such as K(+), Rb(+) or Cs(+). Functionally, acetyl-CoA acetyltransferase; part of the first module of ergosterol biosynthesis pathway that includes the early steps of the pathway, conserved across all eukaryotes, and which results in the formation of mevalonate from acetyl-coenzyme A (acetyl-CoA). In this module, the cytosolic acetyl-CoA acetyltransferase erg10B catalyzes the formation of acetoacetyl-CoA. The hydroxymethylglutaryl-CoA synthases AFUA_8G07210 and AFUA_3G10660 then condense acetyl-CoA with acetoacetyl-CoA to form HMG-CoA. The rate-limiting step of the early module is the reduction to mevalonate by the 3-hydroxy-3-methylglutaryl-coenzyme A (HMG-CoA) reductases hmg1 and hmg2. Mevalonate is also a precursor for the extracellular siderophore triacetylfusarinine C (TAFC). The sequence is that of Acetyl-CoA acetyltransferase erg10B, cytosolic from Aspergillus fumigatus (strain CBS 144.89 / FGSC A1163 / CEA10) (Neosartorya fumigata).